The chain runs to 101 residues: Protamine-3 (101 aa).

The segment at 1 to 101 is disordered; sequence MGSRCAKLST…PSPEPKQTHS (101 aa). Over residues 45–67 the composition is skewed to acidic residues; sequence EGEEEEEDEEEEEEEEEEEEEEQ. Position 93 is a phosphoserine (serine 93).

Belongs to the protamine P3 family. In terms of tissue distribution, testis.

Its subcellular location is the nucleus. It localises to the chromosome. Functionally, protamines substitute for histones in the chromatin of sperm during the haploid phase of spermatogenesis. They compact sperm DNA into a highly condensed, stable and inactive complex. This chain is Protamine-3 (Prm3), found in Mus musculus (Mouse).